A 206-amino-acid chain; its full sequence is Glutathione S-transferase class-mu 28 kDa isozyme (206 aa).

Residues 1 to 81 (VKLIYFNGRG…FIARKHNMMG (81 aa)) form the GST N-terminal domain. Glutathione is bound by residues Tyr-5, 5-6 (YF), Arg-11, 36-40 (WPKIK), Leu-48, 50-51 (IV), and 65-66 (ES). The GST C-terminal domain occupies 83-206 (TDDEYYIIEK…YLSERHATAF (124 aa)).

It belongs to the GST superfamily. Mu family. As to quaternary structure, homodimer.

It carries out the reaction RX + glutathione = an S-substituted glutathione + a halide anion + H(+). In terms of biological role, conjugation of reduced glutathione to a wide number of exogenous and endogenous hydrophobic electrophiles. GST isoenzymes appear to play a central role in the parasite detoxification system. Other functions are also suspected including a role in increasing the solubility of haematin in the parasite gut. The protein is Glutathione S-transferase class-mu 28 kDa isozyme of Schistosoma japonicum (Blood fluke).